Consider the following 995-residue polypeptide: Integrator complex subunit 8 (995 aa).

Threonine 18 bears the Phosphothreonine mark. A WFEF motif motif is present at residues 24–29 (WFEFLL). TPR repeat units lie at residues 250-288 (CQVC…IAEI), 320-356 (SQQL…SLPV), 570-603 (VYIL…VTEF), and 833-866 (HSWL…CSDF).

This sequence belongs to the Integrator subunit 8 family. Component of the Integrator complex, composed of core subunits INTS1, INTS2, INTS3, INTS4, INTS5, INTS6, INTS7, INTS8, INTS9/RC74, INTS10, INTS11/CPSF3L, INTS12, INTS13, INTS14 and INTS15. The core complex associates with protein phosphatase 2A subunits PPP2CA and PPP2R1A, to form the Integrator-PP2A (INTAC) complex.

Its subcellular location is the nucleus. It is found in the chromosome. Functionally, component of the integrator complex, a multiprotein complex that terminates RNA polymerase II (Pol II) transcription in the promoter-proximal region of genes. The integrator complex provides a quality checkpoint during transcription elongation by driving premature transcription termination of transcripts that are unfavorably configured for transcriptional elongation: the complex terminates transcription by (1) catalyzing dephosphorylation of the C-terminal domain (CTD) of Pol II subunit POLR2A/RPB1 and SUPT5H/SPT5, (2) degrading the exiting nascent RNA transcript via endonuclease activity and (3) promoting the release of Pol II from bound DNA. The integrator complex is also involved in terminating the synthesis of non-coding Pol II transcripts, such as enhancer RNAs (eRNAs), small nuclear RNAs (snRNAs), telomerase RNAs and long non-coding RNAs (lncRNAs). Within the integrator complex, INTS8 is required for the recruitment of protein phosphatase 2A (PP2A) to transcription pause-release checkpoint. In Homo sapiens (Human), this protein is Integrator complex subunit 8.